Reading from the N-terminus, the 146-residue chain is uncharacterized protein (146 aa).

Residues 9–141 (VADIEKSLRH…FEKSLMKLQH (133 aa)) enclose the HTH marR-type domain. The H-T-H motif DNA-binding region spans 55 to 78 (IGELSGKMYLACSTTTDLIDRMQK).

This is an uncharacterized protein from Bacillus subtilis (strain 168).